Here is a 960-residue protein sequence, read N- to C-terminus: Collagenase ColA (960 aa).

Positions 1 to 30 are cleaved as a signal peptide; the sequence is MNKNLRFTQMMIGISTMALSFGSIQTQVSA. Positions 31–92 are excised as a propeptide; sequence EETAPYNILQ…KRDEIQLKQS (62 aa). Residues 93–365 are activator domain; the sequence is YTLAELNKMP…AVEQMKTNYG (273 aa). The S1 metalloprotease domain stretch occupies residues 93–764; that stretch reads YTLAELNKMP…VFHGVATEEK (672 aa). Residues 375–644 form a catalytic subdomain region; it reads DLQKIREEGK…MQQLIDNQDK (270 aa). Residue H500 coordinates Zn(2+). Residue E501 is part of the active site. Positions 504 and 532 each coordinate Zn(2+). The tract at residues 652–764 is helper subdomain; that stretch reads NDYLIQHAPK…VFHGVATEEK (113 aa). The PKD domain maps to 768-849; sequence TTIVNMNGPY…ESKEQTKVTV (82 aa). The segment covering 836–845 has biased composition (basic and acidic residues); that stretch reads SRGKESKEQT. The tract at residues 836–859 is disordered; sequence SRGKESKEQTKVTVKQDPQTSESY. The span at 846 to 857 shows a compositional bias: polar residues; sequence KVTVKQDPQTSE. The segment at 852-960 is collagen-binding domain; sequence DPQTSESYEE…KNGEYSLLVK (109 aa).

This sequence belongs to the peptidase M9B family. Collagenase subfamily. Requires Ca(2+) as cofactor. Zn(2+) serves as cofactor.

Its subcellular location is the secreted. It catalyses the reaction Digestion of native collagen in the triple helical region at Xaa-|-Gly bonds. With synthetic peptides, a preference is shown for Gly at P3 and P1', Pro and Ala at P2 and P2', and hydroxyproline, Ala or Arg at P3'.. Functionally, acts as a true collagenase, which is highly active and efficiently targets native tropocollagen. In vitro, can also cleave gelatin and the synthetic peptide FALGPA (furylacryloyl-Leu-Gly-Pro-Ala). May contribute to bacterial virulence in endophthalmitis or opportunistic infections via collagen degradation in the host extracellular matrix (ECM). The protein is Collagenase ColA of Bacillus cereus (strain ATCC 14579 / DSM 31 / CCUG 7414 / JCM 2152 / NBRC 15305 / NCIMB 9373 / NCTC 2599 / NRRL B-3711).